The chain runs to 125 residues: Subtelomeric hrmA-associated cluster protein cgnA (125 aa).

G-Q-I/R/S repeat units lie at residues 11-13, 14-16, 17-19, 20-22, 23-25, 26-28, 29-31, 32-34, 35-37, 38-40, 41-43, 44-46, 47-49, 50-52, 53-55, 56-58, 59-61, 62-64, 65-67, 68-70, 71-73, 74-76, and 77-79; these read GQI, GPI, GQR, GQS, and GQA. Positions 11-79 are 23 X 3 AA approximate tandem repeats of G-Q-I/R/S; that stretch reads GQIGPIGQRG…IGQIGQIGQA (69 aa). Positions 15–57 are disordered; sequence PIGQRGQSGQRGQSGQRGQSGQIGQSGQSGQSGQSGQSGQIGQ.

It is found in the secreted. Hypoxia responsive morphology factor that modulates the expression of the subtelomeric hrmA-associated cluster (HAC) containing genes that alter the hyphal surface (such as reduced total chitin or increased beta-glucan exposure) and perturb inter-hyphal interactions within the developing biofilms, resulting in a loss of vertically aligned polarized growing filaments. Consequently, this hypoxia-typic morphotype (called H-MORPH) with altered biofilm architecture leads to increased hypoxia fitness, increased host inflammation, rapid disease progression, and mortality in a murine model of invasive aspergillosis. GcnA is directly involved in the reduction total surface chitin and the increase beta-glucan exposure, and mediates the detachment of the extracellular matrix and especially of its component galactosaminogalactan (GAG). The chain is Subtelomeric hrmA-associated cluster protein cgnA from Aspergillus fumigatus (strain CBS 144.89 / FGSC A1163 / CEA10) (Neosartorya fumigata).